Here is a 309-residue protein sequence, read N- to C-terminus: 5-oxoprolinase subunit C (309 aa).

The protein belongs to the PxpC family. Forms a complex composed of PxpA, PxpB and PxpC.

The enzyme catalyses 5-oxo-L-proline + ATP + 2 H2O = L-glutamate + ADP + phosphate + H(+). In terms of biological role, catalyzes the cleavage of 5-oxoproline to form L-glutamate coupled to the hydrolysis of ATP to ADP and inorganic phosphate. The protein is 5-oxoprolinase subunit C of Haemophilus influenzae (strain ATCC 51907 / DSM 11121 / KW20 / Rd).